The sequence spans 454 residues: Tyrosine aminotransferase (454 aa).

Residue methionine 1 is modified to N-acetylmethionine. Lysine 280 is modified (N6-(pyridoxal phosphate)lysine). Serine 448 bears the Phosphoserine mark.

This sequence belongs to the class-I pyridoxal-phosphate-dependent aminotransferase family. In terms of assembly, homodimer. It depends on pyridoxal 5'-phosphate as a cofactor.

The catalysed reaction is L-tyrosine + 2-oxoglutarate = 3-(4-hydroxyphenyl)pyruvate + L-glutamate. The protein operates within amino-acid degradation; L-phenylalanine degradation; acetoacetate and fumarate from L-phenylalanine: step 2/6. Functionally, transaminase involved in tyrosine breakdown. Converts tyrosine to p-hydroxyphenylpyruvate. Can catalyze the reverse reaction, using glutamic acid, with 2-oxoglutarate as cosubstrate (in vitro). Has much lower affinity and transaminase activity for phenylalanine. The polypeptide is Tyrosine aminotransferase (Tat) (Mus musculus (Mouse)).